Reading from the N-terminus, the 454-residue chain is Probable ECA polymerase (454 aa).

11 helical membrane passes run 3–23 (LGQFGGLFCIYLIAVIFILTL), 39–59 (FSMLYLLTFYFGFPLTCMLVF), 61–81 (FGVAVVPVEYLLYAMLSATAF), 119–139 (LALVAVGTVGIFFMQNGFLLF), 154–174 (GVALKRFFYFFIPAMLVVYFL), 180–200 (AWFFFLASTVAFGILTYVIVG), 201–221 (GTRANIIIAFSLFLFIGIVRG), 222–242 (WITLWMLAAAGVFGIVGMFWL), 340–360 (LVVMGGVLFIPLGAIVVGLII), 377–397 (YKAAILQSFCFGAVFNIIVLA), and 409–429 (VFFCVIFGACLVLAKLLYWLF).

The protein belongs to the WzyE family. As to quaternary structure, probably part of a complex composed of WzxE, WzyE and WzzE.

The protein resides in the cell inner membrane. Its pathway is bacterial outer membrane biogenesis; enterobacterial common antigen biosynthesis. Its function is as follows. Probably involved in the polymerization of enterobacterial common antigen (ECA) trisaccharide repeat units. In Yersinia pseudotuberculosis serotype O:1b (strain IP 31758), this protein is Probable ECA polymerase.